The following is a 267-amino-acid chain: Tryptophan synthase alpha chain (267 aa).

Catalysis depends on proton acceptor residues Glu-47 and Asp-58.

This sequence belongs to the TrpA family. In terms of assembly, tetramer of two alpha and two beta chains.

The enzyme catalyses (1S,2R)-1-C-(indol-3-yl)glycerol 3-phosphate + L-serine = D-glyceraldehyde 3-phosphate + L-tryptophan + H2O. The protein operates within amino-acid biosynthesis; L-tryptophan biosynthesis; L-tryptophan from chorismate: step 5/5. In terms of biological role, the alpha subunit is responsible for the aldol cleavage of indoleglycerol phosphate to indole and glyceraldehyde 3-phosphate. This chain is Tryptophan synthase alpha chain, found in Chlorobaculum tepidum (strain ATCC 49652 / DSM 12025 / NBRC 103806 / TLS) (Chlorobium tepidum).